We begin with the raw amino-acid sequence, 272 residues long: Protein SSO0103 (272 aa).

It belongs to the CinA family.

This Saccharolobus solfataricus (strain ATCC 35092 / DSM 1617 / JCM 11322 / P2) (Sulfolobus solfataricus) protein is Protein SSO0103.